Here is a 386-residue protein sequence, read N- to C-terminus: Vesicle-associated protein 2-2 (386 aa).

Methionine 1 carries the N-acetylmethionine modification. The Cytoplasmic portion of the chain corresponds to 1–363 (MNMPLLDIQP…TKKIVKEVHN (363 aa)). One can recognise an MSP domain in the interval 5-125 (LLDIQPRTLQ…EENKLRVTLV (121 aa)). Serine 279 bears the Phosphoserine mark. Positions 300 to 353 (ELKLVKDIEEMKLKVDALESKLKQADSTISKLMEERSISSQHRQSLQHELAELR) form a coiled coil. The helical; Anchor for type IV membrane protein transmembrane segment at 364–384 (GFPLLYVCVVAFIAYVIGHFL) threads the bilayer.

The protein belongs to the VAMP-associated protein (VAP) (TC 9.B.17) family. In terms of assembly, interacts with cowpea mosaic virus (CPMV) NTP-binding protein (NTB).

It localises to the endoplasmic reticulum membrane. Its function is as follows. May play a role in vesicle trafficking. The polypeptide is Vesicle-associated protein 2-2 (PVA22) (Arabidopsis thaliana (Mouse-ear cress)).